We begin with the raw amino-acid sequence, 78 residues long: uncharacterized protein (78 aa).

A helical membrane pass occupies residues 21 to 43 (SPFLFGAPLVGGLLGGFLGSALF).

Its subcellular location is the membrane. This is an uncharacterized protein from Bacillus subtilis (strain 168).